We begin with the raw amino-acid sequence, 367 residues long: UDP-N-acetylglucosamine--N-acetylmuramyl-(pentapeptide) pyrophosphoryl-undecaprenol N-acetylglucosamine transferase (367 aa).

UDP-N-acetyl-alpha-D-glucosamine is bound by residues 15–17, N127, R163, S191, I249, and Q294; that span reads TGG.

This sequence belongs to the glycosyltransferase 28 family. MurG subfamily.

It is found in the cell inner membrane. It catalyses the reaction di-trans,octa-cis-undecaprenyl diphospho-N-acetyl-alpha-D-muramoyl-L-alanyl-D-glutamyl-meso-2,6-diaminopimeloyl-D-alanyl-D-alanine + UDP-N-acetyl-alpha-D-glucosamine = di-trans,octa-cis-undecaprenyl diphospho-[N-acetyl-alpha-D-glucosaminyl-(1-&gt;4)]-N-acetyl-alpha-D-muramoyl-L-alanyl-D-glutamyl-meso-2,6-diaminopimeloyl-D-alanyl-D-alanine + UDP + H(+). It participates in cell wall biogenesis; peptidoglycan biosynthesis. Functionally, cell wall formation. Catalyzes the transfer of a GlcNAc subunit on undecaprenyl-pyrophosphoryl-MurNAc-pentapeptide (lipid intermediate I) to form undecaprenyl-pyrophosphoryl-MurNAc-(pentapeptide)GlcNAc (lipid intermediate II). This chain is UDP-N-acetylglucosamine--N-acetylmuramyl-(pentapeptide) pyrophosphoryl-undecaprenol N-acetylglucosamine transferase, found in Burkholderia ambifaria (strain MC40-6).